Here is a 478-residue protein sequence, read N- to C-terminus: Cytochrome c-552 (478 aa).

Residues 1–26 (MARKTLRARRFFSLIFPFFFITSVYA) form the signal peptide. His94 contributes to the heme c binding site. Heme-binding residues include Cys122, Cys125, and Lys126. Residues Cys160, Cys163, His164, Cys209, Cys212, and His213 each coordinate heme c. Residues Glu215, Tyr216, Lys261, and Gln263 each coordinate Ca(2+). Substrate is bound at residue Tyr216. His264 is a substrate binding site. Heme c-binding residues include His275, Cys282, Cys285, His286, His301, Cys314, Cys317, His318, and His393.

Belongs to the cytochrome c-552 family. It depends on Ca(2+) as a cofactor. Heme c serves as cofactor.

The protein localises to the periplasm. It carries out the reaction 6 Fe(III)-[cytochrome c] + NH4(+) + 2 H2O = 6 Fe(II)-[cytochrome c] + nitrite + 8 H(+). It functions in the pathway nitrogen metabolism; nitrate reduction (assimilation). In terms of biological role, catalyzes the reduction of nitrite to ammonia, consuming six electrons in the process. The protein is Cytochrome c-552 of Salmonella paratyphi C (strain RKS4594).